We begin with the raw amino-acid sequence, 109 residues long: Putative pterin-4-alpha-carbinolamine dehydratase (109 aa).

Belongs to the pterin-4-alpha-carbinolamine dehydratase family.

It catalyses the reaction (4aS,6R)-4a-hydroxy-L-erythro-5,6,7,8-tetrahydrobiopterin = (6R)-L-erythro-6,7-dihydrobiopterin + H2O. This Vibrio cholerae serotype O1 (strain ATCC 39315 / El Tor Inaba N16961) protein is Putative pterin-4-alpha-carbinolamine dehydratase.